Here is a 317-residue protein sequence, read N- to C-terminus: Probable arabinan endo-1,5-alpha-L-arabinosidase C (317 aa).

The first 17 residues, 1–17 (MLSFLAALSLPLALVNA), serve as a signal peptide directing secretion. Aspartate 32 (proton acceptor) is an active-site residue. Asparagine 190 carries an N-linked (GlcNAc...) asparagine glycan. Glutamate 198 serves as the catalytic Proton donor.

It belongs to the glycosyl hydrolase 43 family.

It localises to the secreted. It catalyses the reaction Endohydrolysis of (1-&gt;5)-alpha-arabinofuranosidic linkages in (1-&gt;5)-arabinans.. It participates in glycan metabolism; L-arabinan degradation. Endo-1,5-alpha-L-arabinanase involved in degradation of pectin. Its preferred substrate is linear 1,5-alpha-L-arabinan. This Aspergillus flavus (strain ATCC 200026 / FGSC A1120 / IAM 13836 / NRRL 3357 / JCM 12722 / SRRC 167) protein is Probable arabinan endo-1,5-alpha-L-arabinosidase C (abnC).